The primary structure comprises 276 residues: MSLLTADKKVQVDINKNDKKAPVNNKNIVYDTKDLNLWYGETHALKDINLAINEKEVTAIIGPSGCGKSTYIKTLNRMVELVPTVKTTGTITYRGKNILDRSFKVEDLRTHVGMVFQKPNPFPKSIYENVAYGPKIHGIKNKKVLDEIVEKSLRGASIWDEVKDRLNENAYGLSGGQQQRLCIARCLAIEPNVILMDEPTSALDPKSTLRIEELVQELKKDYSIIIVTHNMQQAARISDKTAFFLNGEVVEFDDTDRIFTKPSDQRTEDYISGRFG.

The region spanning 23–271 (VNNKNIVYDT…PSDQRTEDYI (249 aa)) is the ABC transporter domain. Residue 62–69 (GPSGCGKS) participates in ATP binding.

It belongs to the ABC transporter superfamily. Phosphate importer (TC 3.A.1.7) family. The complex is composed of two ATP-binding proteins (PstB), two transmembrane proteins (PstC and PstA) and a solute-binding protein (PstS).

The protein resides in the cell membrane. The catalysed reaction is phosphate(out) + ATP + H2O = ADP + 2 phosphate(in) + H(+). Part of the ABC transporter complex PstSACB involved in phosphate import. Responsible for energy coupling to the transport system. In Oceanobacillus iheyensis (strain DSM 14371 / CIP 107618 / JCM 11309 / KCTC 3954 / HTE831), this protein is Phosphate import ATP-binding protein PstB.